Consider the following 276-residue polypeptide: Krueppel homolog 2 (276 aa).

The segment at 1 to 37 is disordered; that stretch reads MSAPTDQPPRSEGAQTNSSERSSQQQEQPQQSQSQNV. The span at 18–35 shows a compositional bias: low complexity; sequence SSERSSQQQEQPQQSQSQ. Position 22 is a phosphoserine (S22). 3 helical membrane-spanning segments follow: residues 53-73, 125-145, and 181-201; these read ALWA…LPIF, LIFF…LYSV, and ILKA…VLAF.

Belongs to the PER33/POM33 family.

Its subcellular location is the membrane. Its function is as follows. Member of the dosage-dependent hierarchy effective upon white gene expression. This is Krueppel homolog 2 (Kr-h2) from Drosophila melanogaster (Fruit fly).